Consider the following 433-residue polypeptide: Trigger factor (433 aa).

The 86-residue stretch at glycine 163–proline 248 folds into the PPIase FKBP-type domain.

The protein belongs to the FKBP-type PPIase family. Tig subfamily.

It localises to the cytoplasm. It carries out the reaction [protein]-peptidylproline (omega=180) = [protein]-peptidylproline (omega=0). Involved in protein export. Acts as a chaperone by maintaining the newly synthesized protein in an open conformation. Functions as a peptidyl-prolyl cis-trans isomerase. This is Trigger factor from Staphylococcus aureus (strain Newman).